The following is a 157-amino-acid chain: MAQQADQQTVTDSTPELPTTIKELADLLDIPLVDCLVPCNFCGKFLDFLEVCDFDKKQLTLIWKGHFVTACCRSCCAATAIYEFNEFYQQTVLGRDIELATGKSIFDLKIRCQTCLSFLDTIEKLDSCGRGLPFHKVRDRWKGICRQCKHLYLNNDR.

2 zinc fingers span residues 39 to 75 and 112 to 148; these read CNFC…CRSC and CQTC…CRQC.

It belongs to the papillomaviridae E6 protein family. As to quaternary structure, forms homodimers. Interacts with ubiquitin-protein ligase UBE3A/E6-AP; this interaction stimulates UBE3A ubiquitin activity. Interacts with host BAK1.

It localises to the host cytoplasm. It is found in the host nucleus. Functionally, plays a major role in the induction and maintenance of cellular transformation. E6 associates with host UBE3A/E6-AP ubiquitin-protein ligase and modulates its activity. Protects host keratinocytes from apoptosis by mediating the degradation of host BAK1. May also inhibit host immune response. The chain is Protein E6 from Homo sapiens (Human).